We begin with the raw amino-acid sequence, 444 residues long: uncharacterized protein (444 aa).

K268 bears the N6-(pyridoxal phosphate)lysine mark.

Belongs to the class-III pyridoxal-phosphate-dependent aminotransferase family. It depends on pyridoxal 5'-phosphate as a cofactor.

This is an uncharacterized protein from Bacillus subtilis (strain 168).